Consider the following 201-residue polypeptide: MWLPPALLLLSLSGCFSIQGPESVRAPEQGSLTVQCHYKQGWETYIKWWCRGVRWDTCKILIETRGSEQGEKSDRVSIKDNQKDRTFTVTMEGLRRDDADVYWCGIERRGPDLGTQVKVIVDPEGAASTTASSPTNSNMAVFIGSHKRNHYMLLVFVKVPILLILVTAILWLKGSQRVPEEPGEQPIYMNFSEPLTKDMAT.

A signal peptide spans 1–17; it reads MWLPPALLLLSLSGCFS. The 103-residue stretch at 18 to 120 folds into the Ig-like V-type domain; the sequence is IQGPESVRAP…PDLGTQVKVI (103 aa). Residues 18–151 are Extracellular-facing; sequence IQGPESVRAP…FIGSHKRNHY (134 aa). Cysteine 36 and cysteine 104 form a disulfide bridge. A helical membrane pass occupies residues 152 to 172; it reads MLLVFVKVPILLILVTAILWL. The Cytoplasmic portion of the chain corresponds to 173 to 201; that stretch reads KGSQRVPEEPGEQPIYMNFSEPLTKDMAT. Tyrosine 188 bears the Phosphotyrosine; by FYN mark.

Belongs to the CD300 family. In terms of assembly, interacts with TYROBP, which enhances cell surface expression and activation properties. Interacts with GRB2 in the presence of FYN. Phosphorylation on Tyr-188 by FYN is required for interaction with GRB2. Expressed exclusively in myeloid lineages.

Its subcellular location is the cell membrane. Acts as an activating immune receptor through its interaction with ITAM-bearing adapter TYROBP, and also independently by recruitment of GRB2. This is CMRF35-like molecule 7 (CD300LB) from Homo sapiens (Human).